The sequence spans 80 residues: D-alanyl carrier protein 1 (80 aa).

In terms of domain architecture, Carrier spans Met-1–Gln-80. Ser-38 is subject to O-(pantetheine 4'-phosphoryl)serine.

This sequence belongs to the DltC family. Post-translationally, 4'-phosphopantetheine is transferred from CoA to a specific serine of apo-DCP.

It localises to the cytoplasm. It functions in the pathway cell wall biogenesis; lipoteichoic acid biosynthesis. Functionally, carrier protein involved in the D-alanylation of lipoteichoic acid (LTA). The loading of thioester-linked D-alanine onto DltC is catalyzed by D-alanine--D-alanyl carrier protein ligase DltA. The DltC-carried D-alanyl group is further transferred to cell membrane phosphatidylglycerol (PG) by forming an ester bond, probably catalyzed by DltD. D-alanylation of LTA plays an important role in modulating the properties of the cell wall in Gram-positive bacteria, influencing the net charge of the cell wall. This is D-alanyl carrier protein 1 from Lactiplantibacillus plantarum (strain ATCC BAA-793 / NCIMB 8826 / WCFS1) (Lactobacillus plantarum).